The following is a 392-amino-acid chain: MRYTTAGESHGPEEIAVIEGIPAGLHITQEDVNAQLARRQKGYGRGERQKIETDTVTFLTGIRHQKTLGSPITLNVHNDDHNNWSKIMAPNEPQTSENSLRKVLRPRPGHADLVGGIKYRHHDDLRNVLERSSARETTMRVAVGAVAKKLLAEIGVDVHGFVVNVGPAKSDLSTLTQYQDLEALRQVTESFETRALDAAADKAIRDVIDSTKRDANTVGGQVQVMATGVPVGLGSYISADDKLDAKIARAIVGINAFKGVQFGGGFDNAEKYGDQVMDEIFWRPEKGFYRGSDNLGGFEGGMTTGEAIVVRGVVKPIPTLYRPMQSVDIDTHQDHRASIERSDTTAVTAAAVIAEAMVAIELAKAVLDKFDADNIDRMKEQVAAYRQEVKAF.

Arg-39 and Arg-45 together coordinate NADP(+). FMN-binding positions include 131 to 133 (RSS), 255 to 256 (NA), Gly-300, 315 to 319 (KPIPT), and Arg-341.

It belongs to the chorismate synthase family. As to quaternary structure, homotetramer. FMNH2 is required as a cofactor.

The enzyme catalyses 5-O-(1-carboxyvinyl)-3-phosphoshikimate = chorismate + phosphate. It functions in the pathway metabolic intermediate biosynthesis; chorismate biosynthesis; chorismate from D-erythrose 4-phosphate and phosphoenolpyruvate: step 7/7. Functionally, catalyzes the anti-1,4-elimination of the C-3 phosphate and the C-6 proR hydrogen from 5-enolpyruvylshikimate-3-phosphate (EPSP) to yield chorismate, which is the branch point compound that serves as the starting substrate for the three terminal pathways of aromatic amino acid biosynthesis. This reaction introduces a second double bond into the aromatic ring system. The sequence is that of Chorismate synthase from Leuconostoc citreum (strain KM20).